The chain runs to 314 residues: MKIVLANPRGFCAGVDRAISIVERALELYKAPIYVRHEVVHNRFVVEGLKQRGAIFVEELSEVPDDNIVIFSAHGVSQAVRTEAKERALTVFDATCPLVTKVHMEVARASKKSIEVVLIGHAGHPEVEGTMGQYASEAGGMYLVETPEDVEKLIVQDPNNLHYVSQTTLSVDETADVIDELRRVFPKIQGPRKDDICYATQNRQDAVRDMAGQVDVMIVVGSKNSSNSNRLRELSEKLGTTSYLIDCPEELKEEWLTNQAKVGVTAGASAPEELVNQIIEQVKVFGGTTVDELKGREENMFFEVPKELQIKTVS.

C12 provides a ligand contact to [4Fe-4S] cluster. (2E)-4-hydroxy-3-methylbut-2-enyl diphosphate-binding residues include H41 and H74. Residues H41 and H74 each coordinate dimethylallyl diphosphate. Residues H41 and H74 each coordinate isopentenyl diphosphate. Position 96 (C96) interacts with [4Fe-4S] cluster. Residue H124 coordinates (2E)-4-hydroxy-3-methylbut-2-enyl diphosphate. Residue H124 coordinates dimethylallyl diphosphate. H124 is an isopentenyl diphosphate binding site. Catalysis depends on E126, which acts as the Proton donor. A (2E)-4-hydroxy-3-methylbut-2-enyl diphosphate-binding site is contributed by T167. C197 lines the [4Fe-4S] cluster pocket. S225, S226, N227, and S269 together coordinate (2E)-4-hydroxy-3-methylbut-2-enyl diphosphate. Dimethylallyl diphosphate is bound by residues S225, S226, N227, and S269. The isopentenyl diphosphate site is built by S225, S226, N227, and S269.

Belongs to the IspH family. [4Fe-4S] cluster serves as cofactor.

The catalysed reaction is isopentenyl diphosphate + 2 oxidized [2Fe-2S]-[ferredoxin] + H2O = (2E)-4-hydroxy-3-methylbut-2-enyl diphosphate + 2 reduced [2Fe-2S]-[ferredoxin] + 2 H(+). The enzyme catalyses dimethylallyl diphosphate + 2 oxidized [2Fe-2S]-[ferredoxin] + H2O = (2E)-4-hydroxy-3-methylbut-2-enyl diphosphate + 2 reduced [2Fe-2S]-[ferredoxin] + 2 H(+). It participates in isoprenoid biosynthesis; dimethylallyl diphosphate biosynthesis; dimethylallyl diphosphate from (2E)-4-hydroxy-3-methylbutenyl diphosphate: step 1/1. It functions in the pathway isoprenoid biosynthesis; isopentenyl diphosphate biosynthesis via DXP pathway; isopentenyl diphosphate from 1-deoxy-D-xylulose 5-phosphate: step 6/6. Catalyzes the conversion of 1-hydroxy-2-methyl-2-(E)-butenyl 4-diphosphate (HMBPP) into a mixture of isopentenyl diphosphate (IPP) and dimethylallyl diphosphate (DMAPP). Acts in the terminal step of the DOXP/MEP pathway for isoprenoid precursor biosynthesis. This is 4-hydroxy-3-methylbut-2-enyl diphosphate reductase from Aliivibrio salmonicida (strain LFI1238) (Vibrio salmonicida (strain LFI1238)).